The sequence spans 751 residues: MTSTGRFTLPSEENFAEKTKELAELWGADAIRNSDGTHLDEAVLALGKKIYNAYFPTRAHNEWITLHMDETPQVYLLTDRILAESDTVDIPLMESFFAEQLKPNRDADPHKYWEVVDRTTGEVVDSANWTLDADEDTVHVSGVAAWHEYTVSFLAYIIWDPVEMYNHLTNDWGDKEHEIPFDIYHPATRKFVFDTFEQWLKDSPQTDVVRFTTFFYQFTLLFDEKRREKVVDWFGCACTVSPRALDDFEAKYGYRLRPEDFVDGGAYNSAWRVPRKAQRDWIDFLSGFVRENVKQLADMSHAAGKEAMMFLGDQWIGTEPYKDGFDELGLDAVVGSIGDGTTTRMIADIPGVKYTEGRFLPYFFPDTFYEGNDPSIEGLDNWRKARRAILRSPISRMGYGGYLSLAAKFPKFVDTVTHIANEFRDIHDRTGGVAAEGELNVAILNSWGKMRSWMAFTVAHALPNKQTYSYYGILESLSGMRVNVRFISFDDVLAHGIDSDIDVIINGGPVDTAFTGGDVWTNPKLVETVRAWVRGGGAFVGVGEPSSAPRFQTGRFFQLADVIGVDEERYQTLSVDKYFPPVVPDHFITADVPVDPAAREAWEQAGYRIPLSGCGGGQSIKPLGGIDFGEPVLNTYPVNENVTLLRADGGQVQLATNDYGKGRGVYISGLPYSAANARLLERVLFYASHNEDKYAAWSSSNPECEVAHFPEQGLYCVINNTDQPQKTTVTLADGTTEDFDLPDSGIAWREA.

The active-site Proton donor is the Asp-313.

The protein belongs to the glycoside hydrolase 112 family. In terms of assembly, homodimer.

The enzyme catalyses beta-D-galactosyl-(1-&gt;3)-N-acetyl-D-glucosamine + phosphate = alpha-D-galactose 1-phosphate + N-acetyl-D-glucosamine. Its function is as follows. Reversibly phosphorolyzes lacto-N-biose to Gal1-P and N-acetylglucosamine (GlcNAc) and galacto-N-biose to Gal1-P and N-acetylgalactosamine (GalNAc). Involved in the lacto-N-biose I/galacto-N-biose (LNB/GNB) degradation pathway, which is important for host intestinal colonization by bifidobacteria. The sequence is that of 1,3-beta-galactosyl-N-acetylhexosamine phosphorylase (lnpA) from Bifidobacterium longum subsp. longum (strain ATCC 15707 / DSM 20219 / JCM 1217 / NCTC 11818 / E194b).